A 393-amino-acid chain; its full sequence is S-adenosylmethionine sensor upstream of mTORC1 (393 aa).

The disordered stretch occupies residues 1-35; the sequence is MDLRSSAETDPDLSENHPGSVPAELQSRKQEQEKL. Position 94 (Arg-94) interacts with S-adenosyl-L-methionine. The disordered stretch occupies residues 118-141; the sequence is DEKSARHATAGNANTDTNAPPQLS. Residues 125 to 136 show a composition bias toward low complexity; it reads ATAGNANTDTNA. S-adenosyl-L-methionine-binding residues include Gly-160, Asp-178, Asp-190, Phe-191, and Ser-232. A disordered region spans residues 362–393; sequence ELPETPYDSDSGESQSSSAPFYELEDPILLQS.

Belongs to the BMT2/SAMTOR family. Interacts with the GATOR1 complex; interaction is disrupted when samtor binds S-adenosyl-L-methionine. Interacts with the KICSTOR complex; interaction is disrupted when bmt2/samtor binds S-adenosyl-L-methionine.

In terms of biological role, S-adenosyl-L-methionine-binding protein that acts as an inhibitor of mTORC1 signaling via interaction with the GATOR1 and KICSTOR complexes. Acts as a sensor of S-adenosyl-L-methionine to signal methionine sufficiency to mTORC1: in presence of methionine, binds S-adenosyl-L-methionine, leading to disrupt interaction with the GATOR1 and KICSTOR complexes and promote mTORC1 signaling. Upon methionine starvation, S-adenosyl-L-methionine levels are reduced, thereby promoting the association with GATOR1 and KICSTOR, leading to inhibit mTORC1 signaling. Probably also acts as a S-adenosyl-L-methionine-dependent methyltransferase. The protein is S-adenosylmethionine sensor upstream of mTORC1 of Danio rerio (Zebrafish).